We begin with the raw amino-acid sequence, 67 residues long: Large ribosomal subunit protein uL29 (67 aa).

The protein belongs to the universal ribosomal protein uL29 family.

The polypeptide is Large ribosomal subunit protein uL29 (Clostridioides difficile (strain 630) (Peptoclostridium difficile)).